Consider the following 356-residue polypeptide: 4-hydroxy-3-methylbut-2-en-1-yl diphosphate synthase (flavodoxin) (356 aa).

[4Fe-4S] cluster is bound by residues Cys-262, Cys-265, Cys-297, and Glu-304.

The protein belongs to the IspG family. [4Fe-4S] cluster is required as a cofactor.

It carries out the reaction (2E)-4-hydroxy-3-methylbut-2-enyl diphosphate + oxidized [flavodoxin] + H2O + 2 H(+) = 2-C-methyl-D-erythritol 2,4-cyclic diphosphate + reduced [flavodoxin]. The protein operates within isoprenoid biosynthesis; isopentenyl diphosphate biosynthesis via DXP pathway; isopentenyl diphosphate from 1-deoxy-D-xylulose 5-phosphate: step 5/6. In terms of biological role, converts 2C-methyl-D-erythritol 2,4-cyclodiphosphate (ME-2,4cPP) into 1-hydroxy-2-methyl-2-(E)-butenyl 4-diphosphate. The polypeptide is 4-hydroxy-3-methylbut-2-en-1-yl diphosphate synthase (flavodoxin) (Campylobacter fetus subsp. fetus (strain 82-40)).